A 347-amino-acid chain; its full sequence is NADH-ubiquinone oxidoreductase chain 2 (347 aa).

10 consecutive transmembrane segments (helical) span residues isoleucine 13 to leucine 33, phenylalanine 60 to leucine 80, leucine 96 to proline 116, proline 123 to tyrosine 143, leucine 149 to glycine 169, isoleucine 178 to proline 198, threonine 201 to leucine 221, threonine 247 to isoleucine 267, asparagine 274 to leucine 294, and leucine 326 to isoleucine 346.

This sequence belongs to the complex I subunit 2 family. In terms of assembly, core subunit of respiratory chain NADH dehydrogenase (Complex I) which is composed of 45 different subunits. Interacts with TMEM242.

It localises to the mitochondrion inner membrane. The enzyme catalyses a ubiquinone + NADH + 5 H(+)(in) = a ubiquinol + NAD(+) + 4 H(+)(out). Its function is as follows. Core subunit of the mitochondrial membrane respiratory chain NADH dehydrogenase (Complex I) which catalyzes electron transfer from NADH through the respiratory chain, using ubiquinone as an electron acceptor. Essential for the catalytic activity and assembly of complex I. In Pan troglodytes (Chimpanzee), this protein is NADH-ubiquinone oxidoreductase chain 2.